Consider the following 480-residue polypeptide: MAKSPAAVKAEVRRMRRIRRIHFVGIGGVGMCGIAEVLLNLGYEVSGSDLKASAVTERLESFGAKIFIGHAAENAEQADVLVVSSAVNTSNPEVATALERRIPVVPRAEMLAELMRYRHGIAVAGTHGKTTTTSLLASVFAAGGLDPTFVIGGRLNAAGTNAQLGSSRFLIAEADESDASFLHLQPMVSVVTNIDADHMSTYGGDFNRLKKTFIEFLHNLPFYGLAVLCVDDPVVRELLPQVGRPTVTYGFAEDADVRAINVRQEGMRTYFTVLRPDCEPLDVSVNMPGNHNVLNALATIAIATDEGIDDAAIVAGLSGFQGVGRRFQVYGELPVDGGSVMLVDDYGHHPREVAAVIKAVRGGWPERRLVMVYQPHRYSRTRDLYDDFVQVLGEANVLLLVEVYPAGEEPIPGADSRQMCHSIRQRGQLDPIYVERGVDLAPLLKPLLRAGDILLCQGAGDIGAVAPQLIKHPLFVGESK.

An ATP-binding site is contributed by 125–131 (GTHGKTT).

This sequence belongs to the MurCDEF family.

The protein localises to the cytoplasm. The catalysed reaction is UDP-N-acetyl-alpha-D-muramate + L-alanine + ATP = UDP-N-acetyl-alpha-D-muramoyl-L-alanine + ADP + phosphate + H(+). It functions in the pathway cell wall biogenesis; peptidoglycan biosynthesis. Its function is as follows. Cell wall formation. The sequence is that of UDP-N-acetylmuramate--L-alanine ligase from Ectopseudomonas mendocina (strain ymp) (Pseudomonas mendocina).